We begin with the raw amino-acid sequence, 401 residues long: Forkhead box protein H1 (401 aa).

The interval 32–57 (MGPRDNSQLRPPEAESLSKTPKRRKK) is disordered. The fork-head DNA-binding region spans 64–163 (KPPYTYLAMI…QNTALCRRWQ (100 aa)). The segment at 179–251 (VLHGQPYQPP…PSSSSETPLW (73 aa)) is disordered. A compositionally biased stretch (pro residues) spans 185–195 (YQPPSPPPPPR). Positions 221–230 (GQSTAAQAGT) are enriched in polar residues. An SMAD-interaction domain (SID) region spans residues 307–390 (LWGQLPTSYL…VSHPRDLAAP (84 aa)). Residues 311 to 315 (LPTSY) carry the Fast/FoxH1 motif 1 (FM1) motif. The Fast/FoxH1 motif 2 (FM2) signature appears at 321 to 327 (PNVVMPL). Positions 363–384 (LDSLFQGVPPNKSIYDVWVSHP) match the SMAD interaction motif (SIM) motif.

As to quaternary structure, interacts with the MH2 domains of SMAD2 and SMAD3.

Its subcellular location is the nucleus. Functionally, transcriptional activator. Recognizes and binds to the DNA sequence 5'-TGT[GT][GT]ATT-3'. Required for induction of the goosecoid (GSC) promoter by TGF-beta or activin signaling. Forms a transcriptionally active complex containing FOXH1/SMAD2/SMAD4 on a site on the GSC promoter called TARE (TGF-beta/activin response element). This Mus musculus (Mouse) protein is Forkhead box protein H1 (Foxh1).